The sequence spans 639 residues: 1-deoxy-D-xylulose-5-phosphate synthase 1 (639 aa).

Thiamine diphosphate-binding positions include His79 and 120-122 (AHS). Asp155 provides a ligand contact to Mg(2+). Residues 156–157 (GA), Asn184, Tyr293, and Glu373 each bind thiamine diphosphate. Asn184 lines the Mg(2+) pocket.

Belongs to the transketolase family. DXPS subfamily. As to quaternary structure, homodimer. Requires Mg(2+) as cofactor. It depends on thiamine diphosphate as a cofactor.

It catalyses the reaction D-glyceraldehyde 3-phosphate + pyruvate + H(+) = 1-deoxy-D-xylulose 5-phosphate + CO2. The protein operates within metabolic intermediate biosynthesis; 1-deoxy-D-xylulose 5-phosphate biosynthesis; 1-deoxy-D-xylulose 5-phosphate from D-glyceraldehyde 3-phosphate and pyruvate: step 1/1. Its function is as follows. Catalyzes the acyloin condensation reaction between C atoms 2 and 3 of pyruvate and glyceraldehyde 3-phosphate to yield 1-deoxy-D-xylulose-5-phosphate (DXP). This Jannaschia sp. (strain CCS1) protein is 1-deoxy-D-xylulose-5-phosphate synthase 1.